A 193-amino-acid polypeptide reads, in one-letter code: dCTP deaminase (193 aa).

DCTP is bound by residues arginine 110–arginine 115, aspartate 128, valine 136–glutamate 138, tyrosine 171, lysine 178, and glutamine 182. The Proton donor/acceptor role is filled by glutamate 138. Residues tyrosine 171–aspartate 193 are disordered.

Belongs to the dCTP deaminase family. Homotrimer.

The catalysed reaction is dCTP + H2O + H(+) = dUTP + NH4(+). It participates in pyrimidine metabolism; dUMP biosynthesis; dUMP from dCTP (dUTP route): step 1/2. Functionally, catalyzes the deamination of dCTP to dUTP. The protein is dCTP deaminase of Shewanella oneidensis (strain ATCC 700550 / JCM 31522 / CIP 106686 / LMG 19005 / NCIMB 14063 / MR-1).